A 122-amino-acid polypeptide reads, in one-letter code: Large ribosomal subunit protein uL18 (122 aa).

Belongs to the universal ribosomal protein uL18 family. As to quaternary structure, part of the 50S ribosomal subunit; part of the 5S rRNA/L5/L18/L25 subcomplex. Contacts the 5S and 23S rRNAs.

In terms of biological role, this is one of the proteins that bind and probably mediate the attachment of the 5S RNA into the large ribosomal subunit, where it forms part of the central protuberance. The chain is Large ribosomal subunit protein uL18 from Prochlorococcus marinus (strain AS9601).